A 390-amino-acid polypeptide reads, in one-letter code: Galactokinase (390 aa).

33–36 (EHTD) contacts substrate. ATP is bound by residues Ser67 and 124–130 (GAGLSSS). Residues Ser130 and Glu162 each coordinate Mg(2+). Catalysis depends on Asp174, which acts as the Proton acceptor. Tyr224 is a binding site for substrate.

This sequence belongs to the GHMP kinase family. GalK subfamily.

The protein localises to the cytoplasm. The enzyme catalyses alpha-D-galactose + ATP = alpha-D-galactose 1-phosphate + ADP + H(+). The protein operates within carbohydrate metabolism; galactose metabolism. Catalyzes the transfer of the gamma-phosphate of ATP to D-galactose to form alpha-D-galactose-1-phosphate (Gal-1-P). In Exiguobacterium sibiricum (strain DSM 17290 / CCUG 55495 / CIP 109462 / JCM 13490 / 255-15), this protein is Galactokinase.